The following is a 226-amino-acid chain: UPF0758 protein Daro_3142 (226 aa).

One can recognise an MPN domain in the interval 103–226; it reads SFTSPGKVRD…PLSFAERGLL (124 aa). The Zn(2+) site is built by His174, His176, and Asp187. The JAMM motif motif lies at 174–187; sequence HNHPSGIAEPSRAD.

It belongs to the UPF0758 family.

The chain is UPF0758 protein Daro_3142 from Dechloromonas aromatica (strain RCB).